Here is a 407-residue protein sequence, read N- to C-terminus: Probable sodium/metabolite cotransporter BASS5, chloroplastic (407 aa).

The N-terminal 57 residues, 1-57, are a transit peptide targeting the chloroplast; the sequence is MGVISPTETLFLKSQHRLLQPRNYSYALAFHSTRRVANFPRNSFSSLGSCSVDFPLR. 9 helical membrane passes run 101-121, 122-142, 162-184, 191-213, 222-242, 252-272, 286-306, 317-337, and 379-399; these read FIPH…PSFT, WFKP…VGIN, YIGQ…VSLF, GAGI…TFLT, IVMT…LSLL, VFGM…AGLL, PFLP…PLAL, ATIL…GYFF, and LVGV…VSLV.

It belongs to the bile acid:sodium symporter (BASS) (TC 2.A.28) family. In terms of tissue distribution, widely expressed.

The protein localises to the membrane. It localises to the plastid. The protein resides in the chloroplast envelope. Functionally, plastidic transporter involved in the biosynthesis of aliphatic glucosinolates by translocating the biosynthetic intermediates of Met-derived glucosinolates across chloroplast membranes. Transports short chain (C2) alpha-keto acids, such as 4-methylsulfanyl-2-oxobutanoic acid, from the cytosol to the chloroplast where they are subjected to chain elongation cycles. Also functions in the transport of chain-elongated (C3 to C8) Met derivatives from the chloroplast to the cytosol. Does not seem to be involved in the transport of indole-derived glucosinolates. The protein is Probable sodium/metabolite cotransporter BASS5, chloroplastic (BASS5) of Arabidopsis thaliana (Mouse-ear cress).